A 128-amino-acid polypeptide reads, in one-letter code: DELTA-urthionin-Uf1a (128 aa).

The N-terminal stretch at 1 to 24 is a signal peptide; that stretch reads MEGKTVIVSLLLLSIVVGQIQVEA. Intrachain disulfides connect C27–C64, C28–C56, and C40–C50. A propeptide spans 67-128 (acidic domain); sequence LSIPEVTGEA…LCTKNSIETA (62 aa).

The protein belongs to the plant thionin (TC 1.C.44) family. In terms of tissue distribution, expressed in trichomes, that are stiff epidermal hairs located on the surface of petioles and leaves.

It localises to the secreted. Its function is as follows. Plant defense protein that causes pain by probable disruption of cell membranes. Shows cytotoxic activity against the neuroblastoma cell line SH-SY5Y and slightly weaker activity against several non-neuronal cell lines. In vivo, intraplantar injection into mice causes several nocifensive responses, along with swelling and redness. The sequence is that of DELTA-urthionin-Uf1a from Urtica ferox (Tree nettle).